The following is a 372-amino-acid chain: Ciliary neurotrophic factor receptor subunit alpha (372 aa).

Residues 1-22 form the signal peptide; sequence MAASVPWACCAVLAAAAAAVYT. Residues 27–104 enclose the Ig-like C2-type domain; sequence PQEAPHVQYE…WHLRHQVLLH (78 aa). Residues C46 and C89 are joined by a disulfide bond. N-linked (GlcNAc...) asparagine glycosylation is found at N60, N70, N142, and N190. Fibronectin type-III domains lie at 108-205 and 206-306; these read PPRE…VKPD and PPEN…TEEP. The short motif at 290–294 is the WSXWS motif element; the sequence is WSDWS. Residues 301–338 are disordered; that stretch reads PWTEEPRHLTTEAQAPETTTSTTSSLAPPPTTKICDPG. Low complexity predominate over residues 311–326; it reads TEAQAPETTTSTTSSL. S342 is lipidated: GPI-anchor amidated serine. The propeptide at 343–372 is removed in mature form; that stretch reads GGGPSILFLTSVPVTLVLAAAAATANNLLI.

Belongs to the type I cytokine receptor family. Type 3 subfamily. As to quaternary structure, forms a heterotrimer with LIFR and IL6ST. Interacts with heterodimeric neurotropic cytokine composed of CLCF1/CLC and CRLF1/CLF-1. Either alone or in complex with the heterodimer CLCF1-CRLF1 interacts with SORL1; this interaction may promote internalization and lysosomal degradation.

It localises to the cell membrane. In terms of biological role, binds to CNTF. The alpha subunit provides the receptor specificity. The chain is Ciliary neurotrophic factor receptor subunit alpha (Cntfr) from Mus musculus (Mouse).